Here is a 459-residue protein sequence, read N- to C-terminus: Type I restriction enzyme HindI specificity subunit (459 aa).

This sequence belongs to the type-I restriction system S methylase family. The type I restriction/modification system is composed of three polypeptides R, M and S; the restriction enzyme has stoichiometry R(2)M(2)S(1) while the methyltransferase is M(2)S(1).

In terms of biological role, the specificity (S) subunit of a type I restriction enzyme; this subunit dictates DNA sequence specificity. The M and S subunits together form a methyltransferase (MTase) that methylates adenosines in the sequence 5'-RAACN(5)TAG-3'. Methylation protects against cleavage by HindI. In the presence of the R subunit the complex can also act as an endonuclease, binding to the same target sequence but cutting the DNA some distance from this site. Whether the DNA is cut or modified depends on the methylation state of the target sequence. When the target site is unmodified, the DNA is cut. When the target site is hemimethylated, the complex acts as a maintenance MTase modifying the DNA so that both strands become methylated. After locating a non-methylated recognition site, the enzyme complex serves as a molecular motor that translocates DNA in an ATP-dependent manner until a collision occurs that triggers cleavage. The polypeptide is Type I restriction enzyme HindI specificity subunit (Haemophilus influenzae (strain ATCC 51907 / DSM 11121 / KW20 / Rd)).